Here is a 260-residue protein sequence, read N- to C-terminus: Imidazole glycerol phosphate synthase subunit HisF (260 aa).

Residues D11 and D130 contribute to the active site.

This sequence belongs to the HisA/HisF family. As to quaternary structure, heterodimer of HisH and HisF.

The protein resides in the cytoplasm. It carries out the reaction 5-[(5-phospho-1-deoxy-D-ribulos-1-ylimino)methylamino]-1-(5-phospho-beta-D-ribosyl)imidazole-4-carboxamide + L-glutamine = D-erythro-1-(imidazol-4-yl)glycerol 3-phosphate + 5-amino-1-(5-phospho-beta-D-ribosyl)imidazole-4-carboxamide + L-glutamate + H(+). It participates in amino-acid biosynthesis; L-histidine biosynthesis; L-histidine from 5-phospho-alpha-D-ribose 1-diphosphate: step 5/9. Its function is as follows. IGPS catalyzes the conversion of PRFAR and glutamine to IGP, AICAR and glutamate. The HisF subunit catalyzes the cyclization activity that produces IGP and AICAR from PRFAR using the ammonia provided by the HisH subunit. This chain is Imidazole glycerol phosphate synthase subunit HisF, found in Psychrobacter arcticus (strain DSM 17307 / VKM B-2377 / 273-4).